A 285-amino-acid chain; its full sequence is 4-hydroxybenzoate octaprenyltransferase (285 aa).

Helical transmembrane passes span 28–48, 86–106, 110–130, 133–153, 160–180, 207–227, 232–252, and 262–284; these read LWALWMAAGGPPALSVFCIFF, IAAWEAVLIAAVLALIAFALI, NSLTKWLAVVAAVVAGTYPFF, FFAIPQAYLGIAFGFGIPMAF, VPLVAWVMLLANVFWAVAYDT, VAAIMLCYAAFLVLMGWAGVM, WPYWVGLAAAAVCAGYHYTLI, and AAFRHNNWLGACVFAGTAVAYAI.

The protein belongs to the UbiA prenyltransferase family. Requires Mg(2+) as cofactor.

The protein localises to the cell inner membrane. The catalysed reaction is all-trans-octaprenyl diphosphate + 4-hydroxybenzoate = 4-hydroxy-3-(all-trans-octaprenyl)benzoate + diphosphate. The protein operates within cofactor biosynthesis; ubiquinone biosynthesis. Catalyzes the prenylation of para-hydroxybenzoate (PHB) with an all-trans polyprenyl group. Mediates the second step in the final reaction sequence of ubiquinone-8 (UQ-8) biosynthesis, which is the condensation of the polyisoprenoid side chain with PHB, generating the first membrane-bound Q intermediate 3-octaprenyl-4-hydroxybenzoate. This chain is 4-hydroxybenzoate octaprenyltransferase, found in Cupriavidus pinatubonensis (strain JMP 134 / LMG 1197) (Cupriavidus necator (strain JMP 134)).